The sequence spans 192 residues: 7-methyl-GTP pyrophosphatase (192 aa).

The Proton acceptor role is filled by Asp69.

It belongs to the Maf family. YceF subfamily. A divalent metal cation is required as a cofactor.

It is found in the cytoplasm. The enzyme catalyses N(7)-methyl-GTP + H2O = N(7)-methyl-GMP + diphosphate + H(+). In terms of biological role, nucleoside triphosphate pyrophosphatase that hydrolyzes 7-methyl-GTP (m(7)GTP). May have a dual role in cell division arrest and in preventing the incorporation of modified nucleotides into cellular nucleic acids. The chain is 7-methyl-GTP pyrophosphatase from Pseudomonas fluorescens (strain ATCC BAA-477 / NRRL B-23932 / Pf-5).